We begin with the raw amino-acid sequence, 239 residues long: Derlin-2 (239 aa).

Residues 1-57 are Cytoplasmic-facing; sequence MAYQSLRLEYLQIPPVSRAYTTACVLTTAAVQLELITPFQLYFNPELIFKHFQIWRL. Residues 58-78 form a helical membrane-spanning segment; sequence ITNFLFFGPVGFNFLFNMIFL. At 79-96 the chain is on the lumenal side; it reads YRYCRMLEEGSFRGRTAD. The helical transmembrane segment at 97–117 threads the bilayer; it reads FVFMFLFGGFLMTLFGLFVSL. At 118–150 the chain is on the cytoplasmic side; the sequence is VFLGQAFTIMLVYVWSRRNPYVRMNFFGLLNFQ. Residues 151–171 form a helical membrane-spanning segment; that stretch reads APFLPWVLMGFSLLLGNSIIV. Position 172 (D172) is a topological domain, lumenal. A helical membrane pass occupies residues 173–193; it reads LLGIAVGHIYFFLEDIFPNQP. The Cytoplasmic portion of the chain corresponds to 194-239; it reads GGIRILKTPSILRTIFDTPDEDPNYNPLPEERPGGFAWGEGQRLGG. The segment at 214 to 239 is disordered; it reads EDPNYNPLPEERPGGFAWGEGQRLGG. The segment covering 229-239 has biased composition (gly residues); it reads FAWGEGQRLGG.

The protein belongs to the derlin family. Forms homo- and heterooligomers with DERL3 and, to a lesser extent, with DERL1. Interacts with the SEL1L/SYVN1 and VCP/SELENOS protein complexes. Mediates association between VCP and EDEM1, as well as that between VCP and the misfolded glycoproteins. Interacts with OS9. Interacts with SELENOK and SELENOS. Interacts with the signal recognition particle/SRP and the SRP receptor; in the process of endoplasmic reticulum stress-induced pre-emptive quality control. Interacts with CCDC47. In terms of tissue distribution, widely expressed, with lowest levels in brain and heart.

The protein localises to the endoplasmic reticulum membrane. In terms of biological role, functional component of endoplasmic reticulum-associated degradation (ERAD) for misfolded lumenal glycoproteins, but not that of misfolded nonglycoproteins. May act by forming a channel that allows the retrotranslocation of misfolded glycoproteins into the cytosol where they are ubiquitinated and degraded by the proteasome. May mediate the interaction between VCP and misfolded glycoproteins. May also be involved in endoplasmic reticulum stress-induced pre-emptive quality control, a mechanism that selectively attenuates the translocation of newly synthesized proteins into the endoplasmic reticulum and reroutes them to the cytosol for proteasomal degradation. The polypeptide is Derlin-2 (Mus musculus (Mouse)).